The sequence spans 754 residues: Probable TonB-dependent siderophore receptor PirA (754 aa).

The signal sequence occupies residues 1-24 (MSKRIIQSVLSVSVLASMMSMAFA). Residues 54–181 (EQVKQSLGVS…AGGVVNIITK (128 aa)) enclose the TBDR plug domain. The TBDR beta-barrel domain maps to 186 to 754 (ETHGSVEFYT…AYYASLKYSF (569 aa)). Over residues 404–414 (VSTTQGKDSSG) the composition is skewed to polar residues. Residues 404–424 (VSTTQGKDSSGSGYGDQLAKG) form a disordered region. An intrachain disulfide couples Cys511 to Cys519. The short motif at 737–754 (QTYNEPGRAYYASLKYSF) is the TonB C-terminal box element.

Belongs to the TonB-dependent receptor family.

Its subcellular location is the cell outer membrane. Functionally, probably involved in the initial step of iron uptake by binding iron chelating siderophores, thereby allowing extraction of iron from the environment. May bind the siderophore, ferric enterobactin, with micromolar affinity. This Acinetobacter baumannii (strain ATCC 19606 / DSM 30007 / JCM 6841 / CCUG 19606 / CIP 70.34 / NBRC 109757 / NCIMB 12457 / NCTC 12156 / 81) protein is Probable TonB-dependent siderophore receptor PirA.